The following is a 1072-amino-acid chain: Carbamoyl phosphate synthase large chain (1072 aa).

The tract at residues 1-401 (MPKRLDINTI…SLLKAVRSLE (401 aa)) is carboxyphosphate synthetic domain. Positions 129, 169, 175, 176, 208, 210, 215, 241, 242, 243, 284, and 298 each coordinate ATP. The ATP-grasp 1 domain occupies 133–327 (RTLMQDLNEP…IAKLAAKIAV (195 aa)). Mg(2+)-binding residues include Gln-284, Glu-298, and Asn-300. Mn(2+) contacts are provided by Gln-284, Glu-298, and Asn-300. The interval 402 to 546 (LGIYHLELDH…YSTYADENES (145 aa)) is oligomerization domain. The segment at 547-929 (IVTDRKSVVV…ALYKGLVASG (383 aa)) is carbamoyl phosphate synthetic domain. An ATP-grasp 2 domain is found at 671–861 (EAALTKLGIP…MANVATKVIL (191 aa)). 9 residues coordinate ATP: Arg-707, Arg-746, Glu-752, Gly-777, Val-778, His-779, Ser-780, Gln-820, and Glu-832. Mg(2+)-binding residues include Gln-820, Glu-832, and Asn-834. Residues Gln-820, Glu-832, and Asn-834 each coordinate Mn(2+). Residues 930–1072 (INIPTHGSVI…QTKRHEVVHA (143 aa)) form the MGS-like domain. Residues 930–1072 (INIPTHGSVI…QTKRHEVVHA (143 aa)) are allosteric domain.

Belongs to the CarB family. In terms of assembly, composed of two chains; the small (or glutamine) chain promotes the hydrolysis of glutamine to ammonia, which is used by the large (or ammonia) chain to synthesize carbamoyl phosphate. Tetramer of heterodimers (alpha,beta)4. Mg(2+) serves as cofactor. The cofactor is Mn(2+).

The catalysed reaction is hydrogencarbonate + L-glutamine + 2 ATP + H2O = carbamoyl phosphate + L-glutamate + 2 ADP + phosphate + 2 H(+). It catalyses the reaction hydrogencarbonate + NH4(+) + 2 ATP = carbamoyl phosphate + 2 ADP + phosphate + 2 H(+). Its pathway is amino-acid biosynthesis; L-arginine biosynthesis; carbamoyl phosphate from bicarbonate: step 1/1. It participates in pyrimidine metabolism; UMP biosynthesis via de novo pathway; (S)-dihydroorotate from bicarbonate: step 1/3. Large subunit of the glutamine-dependent carbamoyl phosphate synthetase (CPSase). CPSase catalyzes the formation of carbamoyl phosphate from the ammonia moiety of glutamine, carbonate, and phosphate donated by ATP, constituting the first step of 2 biosynthetic pathways, one leading to arginine and/or urea and the other to pyrimidine nucleotides. The large subunit (synthetase) binds the substrates ammonia (free or transferred from glutamine from the small subunit), hydrogencarbonate and ATP and carries out an ATP-coupled ligase reaction, activating hydrogencarbonate by forming carboxy phosphate which reacts with ammonia to form carbamoyl phosphate. This is Carbamoyl phosphate synthase large chain from Bacillus cereus (strain AH187).